Here is a 48-residue protein sequence, read N- to C-terminus: Delta-stichotoxin-Hcr1e (48 aa).

3 disulfides stabilise this stretch: C3–C43, C5–C33, and C26–C44.

Belongs to the sea anemone sodium channel inhibitory toxin family. Type II subfamily.

Its subcellular location is the secreted. It is found in the nematocyst. Its function is as follows. Binds to site 3 of voltage-gated sodium channels and inhibits the inactivation process. In Radianthus crispa (Leathery sea anemone), this protein is Delta-stichotoxin-Hcr1e.